We begin with the raw amino-acid sequence, 462 residues long: Tryptophan dimethylallyltransferase ifgA (462 aa).

L-tryptophan is bound by residues 83-84 (IL) and glutamate 92. Substrate is bound by residues arginine 103, lysine 189, and tyrosine 191. Residues tyrosine 193 and arginine 246 each coordinate L-tryptophan. 5 residues coordinate substrate: arginine 259, lysine 261, tyrosine 263, glutamine 345, and tyrosine 347.

Belongs to the tryptophan dimethylallyltransferase family. Homodimer.

The enzyme catalyses L-tryptophan + dimethylallyl diphosphate = 4-(3-methylbut-2-enyl)-L-tryptophan + diphosphate. It functions in the pathway alkaloid biosynthesis; ergot alkaloid biosynthesis. Tryptophan dimethylallyltransferase; part of the gene cluster that mediates the biosynthesis of isofumigaclavines, fungal ergot alkaloids. The tryptophan dimethylallyltransferase ifgA catalyzes the first step of ergot alkaloid biosynthesis by condensing dimethylallyl diphosphate (DMAP) and tryptophan to form 4-dimethylallyl-L-tryptophan. The second step is catalyzed by the methyltransferase ifgB that methylates 4-dimethylallyl-L-tryptophan in the presence of S-adenosyl-L-methionine, resulting in the formation of N-methyl-dimethylallyl-L-tryptophan. The catalase ifgD and the FAD-dependent oxidoreductase ifgC then transform N-methyl-dimethylallyl-L-tryptophan to chanoclavine-I which is further oxidized by ifgE in the presence of NAD(+), resulting in the formation of chanoclavine-I aldehyde. The chanoclavine-I aldehyde reductases ifgG and/or fgaOx3 reduce chanoclavine-I aldehyde to dihydrochanoclavine-I aldehyde that spontaneously dehydrates to form 6,8-dimethyl-6,7-didehydroergoline. The festuclavine dehydrogenases ifgF1 and/or ifgF2 then catalyze the reduction of 6,8-dimethyl-6,7-didehydroergoline to form festuclavine. Hydrolysis of festuclavine by a yet undetermined cytochrome P450 monooxygenase (called ifgH) then leads to the formation of isofumigaclavine B which is in turn acetylated by ifgI to isofumigaclavine A. Penicillium roqueforti has interestingly at least two sets of genes for the consumption of chanoclavine-I aldehyde on three different loci, the OYEs ifgG/fgaOx3 and the festuclavine synthase homologs ifgF1/ifgF2. The reason for the duplication of these genes is unclear, probably to ensure the conversion of chanoclavine-I aldehyde by differential gene expression under various environmental conditions. The chain is Tryptophan dimethylallyltransferase ifgA from Penicillium roqueforti (strain FM164).